Consider the following 522-residue polypeptide: Maturase K (522 aa).

The protein belongs to the intron maturase 2 family. MatK subfamily.

It localises to the plastid. The protein resides in the chloroplast. Its function is as follows. Usually encoded in the trnK tRNA gene intron. Probably assists in splicing its own and other chloroplast group II introns. The protein is Maturase K of Tigridia pavonia (Mexican shell flower).